Reading from the N-terminus, the 182-residue chain is Ribosome-recycling factor (182 aa).

The tract at residues 136–158 (IKKQEKEGDLSEDQSRDEQDQVQ) is disordered.

The protein belongs to the RRF family.

The protein resides in the cytoplasm. In terms of biological role, responsible for the release of ribosomes from messenger RNA at the termination of protein biosynthesis. May increase the efficiency of translation by recycling ribosomes from one round of translation to another. This is Ribosome-recycling factor from Synechococcus sp. (strain CC9311).